A 439-amino-acid chain; its full sequence is GTPase Obg (439 aa).

The region spanning 1-159 is the Obg domain; the sequence is MAFVDQAQIE…RNLKLELKVL (159 aa). An OBG-type G domain is found at 160–336; it reads ADVGLVGFPS…LMRLTADMLA (177 aa). GTP-binding positions include 166–173, 191–195, 213–216, 283–286, and 317–319; these read GFPSAGKS, FTTLS, DLPG, TKMD, and SSI. The Mg(2+) site is built by serine 173 and threonine 193. Residues 338-357 are disordered; sequence APAPESYRPETKNDTSEKSY. Basic and acidic residues predominate over residues 344 to 354; it reads YRPETKNDTSE. Residues 358–439 form the OCT domain; sequence TFKPETHDFT…NSDFVFEFSE (82 aa).

The protein belongs to the TRAFAC class OBG-HflX-like GTPase superfamily. OBG GTPase family. Monomer. Requires Mg(2+) as cofactor.

The protein resides in the cytoplasm. Its function is as follows. An essential GTPase which binds GTP, GDP and possibly (p)ppGpp with moderate affinity, with high nucleotide exchange rates and a fairly low GTP hydrolysis rate. Plays a role in control of the cell cycle, stress response, ribosome biogenesis and in those bacteria that undergo differentiation, in morphogenesis control. The protein is GTPase Obg of Leuconostoc mesenteroides subsp. mesenteroides (strain ATCC 8293 / DSM 20343 / BCRC 11652 / CCM 1803 / JCM 6124 / NCDO 523 / NBRC 100496 / NCIMB 8023 / NCTC 12954 / NRRL B-1118 / 37Y).